The following is a 218-amino-acid chain: Adenylate kinase (218 aa).

10 to 15 is a binding site for ATP; that stretch reads GAGKGT. The interval 30-59 is NMP; it reads STGDMLRAAVKAGTPLGLEAKKVMDAGGLV. AMP contacts are provided by residues Thr31, Arg36, 57-59, 85-88, and Gln92; these read GLV and GFPR. The interval 122–159 is LID; it reads ERRVHPASGRSYHVRFNPPKAEGVDDVTGEPLVQRDDD. Residues Arg123 and 132-133 contribute to the ATP site; that span reads SY. 2 residues coordinate AMP: Arg156 and Arg167. Position 203 (Gly203) interacts with ATP.

It belongs to the adenylate kinase family. Monomer.

Its subcellular location is the cytoplasm. It catalyses the reaction AMP + ATP = 2 ADP. It functions in the pathway purine metabolism; AMP biosynthesis via salvage pathway; AMP from ADP: step 1/1. Functionally, catalyzes the reversible transfer of the terminal phosphate group between ATP and AMP. Plays an important role in cellular energy homeostasis and in adenine nucleotide metabolism. This Bordetella pertussis (strain Tohama I / ATCC BAA-589 / NCTC 13251) protein is Adenylate kinase.